The sequence spans 257 residues: MQVIRLAALSDNYIFLLHDSHKNIAAVVDPAEAEPVLKQLAQLKAELVAIFNTHHHNDHVGGNQKLIQKFPQVKVYGGAKDQGRIPGQQVFLQPGDRVQFADRVAEVIFVPGHTRAHIAYYFPPQTDDTPGELFCGDTLFAGGCGRLFEGTPAQMVESLTKLRSLPENTRVWCAHEYTLKNLQFALSVDSKNTELQKRLDEVKTKRSQGIATVPSLLGVEKLTNPFLRWEQPSLQLAVNSNDPVQTFARIRGLKDKF.

Residues histidine 54, histidine 56, aspartate 58, histidine 59, histidine 113, aspartate 137, and histidine 175 each coordinate Zn(2+).

This sequence belongs to the metallo-beta-lactamase superfamily. Glyoxalase II family. As to quaternary structure, monomer. The cofactor is Zn(2+).

It carries out the reaction an S-(2-hydroxyacyl)glutathione + H2O = a 2-hydroxy carboxylate + glutathione + H(+). It functions in the pathway secondary metabolite metabolism; methylglyoxal degradation; (R)-lactate from methylglyoxal: step 2/2. In terms of biological role, thiolesterase that catalyzes the hydrolysis of S-D-lactoyl-glutathione to form glutathione and D-lactic acid. This Nostoc sp. (strain PCC 7120 / SAG 25.82 / UTEX 2576) protein is Hydroxyacylglutathione hydrolase.